Here is a 363-residue protein sequence, read N- to C-terminus: UDP-N-acetylglucosamine--N-acetylmuramyl-(pentapeptide) pyrophosphoryl-undecaprenol N-acetylglucosamine transferase (363 aa).

Residues Thr-14–Gly-16, Arg-171, Ser-200, and Gln-290 contribute to the UDP-N-acetyl-alpha-D-glucosamine site.

The protein belongs to the glycosyltransferase 28 family. MurG subfamily.

It is found in the cell inner membrane. It carries out the reaction di-trans,octa-cis-undecaprenyl diphospho-N-acetyl-alpha-D-muramoyl-L-alanyl-D-glutamyl-meso-2,6-diaminopimeloyl-D-alanyl-D-alanine + UDP-N-acetyl-alpha-D-glucosamine = di-trans,octa-cis-undecaprenyl diphospho-[N-acetyl-alpha-D-glucosaminyl-(1-&gt;4)]-N-acetyl-alpha-D-muramoyl-L-alanyl-D-glutamyl-meso-2,6-diaminopimeloyl-D-alanyl-D-alanine + UDP + H(+). Its pathway is cell wall biogenesis; peptidoglycan biosynthesis. Cell wall formation. Catalyzes the transfer of a GlcNAc subunit on undecaprenyl-pyrophosphoryl-MurNAc-pentapeptide (lipid intermediate I) to form undecaprenyl-pyrophosphoryl-MurNAc-(pentapeptide)GlcNAc (lipid intermediate II). The protein is UDP-N-acetylglucosamine--N-acetylmuramyl-(pentapeptide) pyrophosphoryl-undecaprenol N-acetylglucosamine transferase of Borrelia garinii subsp. bavariensis (strain ATCC BAA-2496 / DSM 23469 / PBi) (Borreliella bavariensis).